The following is a 361-amino-acid chain: Peptide chain release factor 1 (361 aa).

Residue Gln-235 is modified to N5-methylglutamine. A disordered region spans residues 283 to 306; the sequence is RSQQATAEAMTRKLQVGSGDRSQR.

Belongs to the prokaryotic/mitochondrial release factor family. Post-translationally, methylated by PrmC. Methylation increases the termination efficiency of RF1.

Its subcellular location is the cytoplasm. Peptide chain release factor 1 directs the termination of translation in response to the peptide chain termination codons UAG and UAA. The protein is Peptide chain release factor 1 of Xylella fastidiosa (strain M23).